Here is a 96-residue protein sequence, read N- to C-terminus: Integration host factor subunit alpha (96 aa).

This sequence belongs to the bacterial histone-like protein family. As to quaternary structure, heterodimer of an alpha and a beta chain.

Functionally, this protein is one of the two subunits of integration host factor, a specific DNA-binding protein that functions in genetic recombination as well as in transcriptional and translational control. The protein is Integration host factor subunit alpha of Haemophilus influenzae (strain 86-028NP).